The chain runs to 216 residues: Endoplasmic reticulum vesicle protein 25 (216 aa).

Positions 1–20 are cleaved as a signal peptide; sequence MASLKSLLSGFLLLAGAAQA. Topologically, residues 21–185 are lumenal; it reads LKFDLEATSS…TNESTNNRVK (165 aa). In terms of domain architecture, GOLD spans 36-126; sequence RRCIRNFVNK…RRHVELDIDI (91 aa). The chain crosses the membrane as a helical span at residues 186–206; it reads WFGMATTFLLIALWGWQIMYL. The Cytoplasmic portion of the chain corresponds to 207-216; sequence RAYFRSKHLI.

This sequence belongs to the EMP24/GP25L family.

Its subcellular location is the endoplasmic reticulum membrane. The protein localises to the golgi apparatus membrane. Constituent of COPII-coated endoplasmic reticulum-derived transport vesicles. Required for efficient transport of a subset of secretory proteins to the Golgi. Facilitates retrograde transport from the Golgi to the endoplasmic reticulum. This chain is Endoplasmic reticulum vesicle protein 25 (erv-1), found in Neurospora crassa (strain ATCC 24698 / 74-OR23-1A / CBS 708.71 / DSM 1257 / FGSC 987).